The primary structure comprises 310 residues: tRNA-splicing endonuclease subunit Sen34 (310 aa).

Positions 119–177 (GQAAKKQKLEQASGASSSQEAGSSQAAKEDETSDGQASGEQEEAGPSSSQAGPSNGVAP) are disordered. Residues 128-144 (EQASGASSSQEAGSSQA) are compositionally biased toward low complexity. Active-site residues include tyrosine 247, histidine 255, and lysine 286.

It belongs to the tRNA-intron endonuclease family. As to quaternary structure, tRNA splicing endonuclease is a heterotetramer composed of TSEN2, TSEN15, TSEN34/LENG5 and TSEN54. tRNA splicing endonuclease complex also contains proteins of the pre-mRNA 3'-end processing machinery such as CLP1, CPSF1, CPSF4 and CSTF2.

The protein resides in the nucleus. Its subcellular location is the nucleolus. The catalysed reaction is pretRNA = a 3'-half-tRNA molecule with a 5'-OH end + a 5'-half-tRNA molecule with a 2',3'-cyclic phosphate end + an intron with a 2',3'-cyclic phosphate and a 5'-hydroxyl terminus.. Constitutes one of the two catalytic subunit of the tRNA-splicing endonuclease complex, a complex responsible for identification and cleavage of the splice sites in pre-tRNA. It cleaves pre-tRNA at the 5'- and 3'-splice sites to release the intron. The products are an intron and two tRNA half-molecules bearing 2',3'-cyclic phosphate and 5'-OH termini. There are no conserved sequences at the splice sites, but the intron is invariably located at the same site in the gene, placing the splice sites an invariant distance from the constant structural features of the tRNA body. It probably carries the active site for 3'-splice site cleavage. The tRNA splicing endonuclease is also involved in mRNA processing via its association with pre-mRNA 3'-end processing factors, establishing a link between pre-tRNA splicing and pre-mRNA 3'-end formation, suggesting that the endonuclease subunits function in multiple RNA-processing events. This is tRNA-splicing endonuclease subunit Sen34 (TSEN34) from Homo sapiens (Human).